We begin with the raw amino-acid sequence, 96 residues long: UPF0235 protein Shewmr4_1190 (96 aa).

It belongs to the UPF0235 family.

In Shewanella sp. (strain MR-4), this protein is UPF0235 protein Shewmr4_1190.